The following is a 507-amino-acid chain: Nuclear distribution protein PAC1 (507 aa).

The stretch at 72 to 98 (STVLRLQRKIMDLTDEVSNLKTIIEAK) forms a coiled coil. WD repeat units lie at residues 125-164 (QTHQSVNTVAVHPYLPLIMAGCSDGTLSVWNIANDDPSIP), 170-222 (AHSR…QIRI), 225-265 (GHDH…CTRT), 268-312 (GHSD…GLCL), 315-389 (GHSH…VRPN), 410-449 (GHQSWVKTLQVHPNGRFIFSAGDDKSIRVWDLSTLATGGR), and 474-507 (PKDTTNEDILQDIESRMRCVFVSGGTDNTVRLWS).

It belongs to the WD repeat LIS1/nudF family. Self-associates. Interacts with NDL1 and dynein.

It is found in the cytoplasm. It localises to the cytoskeleton. Its subcellular location is the spindle pole. In terms of biological role, positively regulates the activity of the minus-end directed microtubule motor protein dynein. Plays a central role in positioning the mitotic spindle at the bud neck during cell division. Targets cytoplasmic dynein to microtubule plus ends, thereby promoting dynein-mediated microtubule sliding along the bud cortex and consequently the movement of the mitotic spindle to the bud neck. In Meyerozyma guilliermondii (strain ATCC 6260 / CBS 566 / DSM 6381 / JCM 1539 / NBRC 10279 / NRRL Y-324) (Yeast), this protein is Nuclear distribution protein PAC1.